The following is a 560-amino-acid chain: MNNNIINLIAAIILSLSIIFGWQYFVVKPEQKKQQQQIAVQKAENLKKQQLKAVVEPATGIVVQEESQVQRIKIESESLTGSISLKGLRFDDLILKKYKQDLSKNSPEVRLFSPANTENAYFAEVGLVSNLSSVKLPNNDTIWNSDSEILSPEKPVHLFWVNEDGVKFLVTITVDENYLFTIEQTIVNNSDKELPVQSYGLINRKYIAVEKAVNILHQGPIGCIDENLKEYSYDDIKDKKSEKFVASKVDWIGITDKYWLSSLIPDKSSNYSSNFNYALKQGTERYQVDFISPVQIIKPGEDFSIKSRIFAGAKKVDLLDKYEKQYDIKLFDRAIDFGWFYIITKPVFYAMNFFYGYVGNFGVSILIVTVIIKLLMFTLANKSYRSMKKMKNLQPEIDRIKNLYSDDKARLNQEIMALYKKEKVNPVAGCLPILVQIPVFFSIYKVLYVTIEMRQAPFYGWIKDLSASDPTTIFNLFGLLPFSPPLFLMIGAWPILMAITMFLQQKMSPEPADPMQAQVMKFMPLIFLFMFSSFPVGLLIYWSWNNILSIIQQYYINKFN.

6 helical membrane passes run 5–25 (IINL…WQYF), 334–354 (AIDF…MNFF), 357–377 (YVGN…LLMF), 431–451 (LPIL…YVTI), 476–496 (LFGL…WPIL), and 522–542 (FMPL…LIYW).

The protein belongs to the OXA1/ALB3/YidC family. Type 1 subfamily. Interacts with the Sec translocase complex via SecD. Specifically interacts with transmembrane segments of nascent integral membrane proteins during membrane integration.

It is found in the cell inner membrane. Required for the insertion and/or proper folding and/or complex formation of integral membrane proteins into the membrane. Involved in integration of membrane proteins that insert both dependently and independently of the Sec translocase complex, as well as at least some lipoproteins. Aids folding of multispanning membrane proteins. In Rickettsia africae (strain ESF-5), this protein is Membrane protein insertase YidC.